The following is a 256-amino-acid chain: Deoxyribose-phosphate aldolase (256 aa).

The active-site Proton donor/acceptor is the aspartate 102. Lysine 165 functions as the Schiff-base intermediate with acetaldehyde in the catalytic mechanism. The active-site Proton donor/acceptor is lysine 197.

This sequence belongs to the DeoC/FbaB aldolase family. DeoC type 2 subfamily.

The protein resides in the cytoplasm. The catalysed reaction is 2-deoxy-D-ribose 5-phosphate = D-glyceraldehyde 3-phosphate + acetaldehyde. It functions in the pathway carbohydrate degradation; 2-deoxy-D-ribose 1-phosphate degradation; D-glyceraldehyde 3-phosphate and acetaldehyde from 2-deoxy-alpha-D-ribose 1-phosphate: step 2/2. Catalyzes a reversible aldol reaction between acetaldehyde and D-glyceraldehyde 3-phosphate to generate 2-deoxy-D-ribose 5-phosphate. This Shewanella sp. (strain ANA-3) protein is Deoxyribose-phosphate aldolase.